The sequence spans 402 residues: D-mannonate dehydratase (402 aa).

Substrate is bound by residues asparagine 37 and histidine 122. The active-site Proton donor/acceptor is tyrosine 159. Aspartate 210 provides a ligand contact to Mg(2+). The Proton donor/acceptor role is filled by histidine 212. 2 residues coordinate Mg(2+): glutamate 236 and glutamate 262. 5 residues coordinate substrate: glutamate 262, arginine 283, histidine 312, aspartate 316, and glutamate 339.

Belongs to the mandelate racemase/muconate lactonizing enzyme family. GalD subfamily. The cofactor is Mg(2+).

It catalyses the reaction D-mannonate = 2-dehydro-3-deoxy-D-gluconate + H2O. Its pathway is carbohydrate metabolism; pentose and glucuronate interconversion. Its function is as follows. Catalyzes the dehydration of D-mannonate. Has no detectable activity with a panel of 70 other acid sugars (in vitro). This chain is D-mannonate dehydratase, found in Rhizorhabdus wittichii (strain DSM 6014 / CCUG 31198 / JCM 15750 / NBRC 105917 / EY 4224 / RW1) (Sphingomonas wittichii).